Consider the following 242-residue polypeptide: Ubiquinone/menaquinone biosynthesis C-methyltransferase UbiE (242 aa).

S-adenosyl-L-methionine-binding positions include Thr-69, Asp-87, and Asn-114–Ala-115.

It belongs to the class I-like SAM-binding methyltransferase superfamily. MenG/UbiE family.

It catalyses the reaction a 2-demethylmenaquinol + S-adenosyl-L-methionine = a menaquinol + S-adenosyl-L-homocysteine + H(+). It carries out the reaction a 2-methoxy-6-(all-trans-polyprenyl)benzene-1,4-diol + S-adenosyl-L-methionine = a 5-methoxy-2-methyl-3-(all-trans-polyprenyl)benzene-1,4-diol + S-adenosyl-L-homocysteine + H(+). It participates in quinol/quinone metabolism; menaquinone biosynthesis; menaquinol from 1,4-dihydroxy-2-naphthoate: step 2/2. Its pathway is cofactor biosynthesis; ubiquinone biosynthesis. Its function is as follows. Methyltransferase required for the conversion of demethylmenaquinol (DMKH2) to menaquinol (MKH2) and the conversion of 2-polyprenyl-6-methoxy-1,4-benzoquinol (DDMQH2) to 2-polyprenyl-3-methyl-6-methoxy-1,4-benzoquinol (DMQH2). The protein is Ubiquinone/menaquinone biosynthesis C-methyltransferase UbiE of Zymomonas mobilis subsp. mobilis (strain ATCC 31821 / ZM4 / CP4).